A 167-amino-acid chain; its full sequence is Mediator of RNA polymerase II transcription subunit 10 (167 aa).

The disordered stretch occupies residues 53–88 (LSTHTKPQPPSQDEEQKEKQDDTPEGSANDPLLRDI).

It belongs to the Mediator complex subunit 10 family. In terms of assembly, component of the Mediator complex.

Its subcellular location is the nucleus. Functionally, component of the Mediator complex, a coactivator involved in the regulated transcription of nearly all RNA polymerase II-dependent genes. Mediator functions as a bridge to convey information from gene-specific regulatory proteins to the basal RNA polymerase II transcription machinery. Mediator is recruited to promoters by direct interactions with regulatory proteins and serves as a scaffold for the assembly of a functional preinitiation complex with RNA polymerase II and the general transcription factors. In Neosartorya fischeri (strain ATCC 1020 / DSM 3700 / CBS 544.65 / FGSC A1164 / JCM 1740 / NRRL 181 / WB 181) (Aspergillus fischerianus), this protein is Mediator of RNA polymerase II transcription subunit 10 (nut2).